Here is a 289-residue protein sequence, read N- to C-terminus: Phospholipase A1 (289 aa).

Positions 1–20 are cleaved as a signal peptide; sequence MRAILRGLLPATLLPLAAYA. Over 21 to 52 the chain is Periplasmic; sequence QEATIKEVHDAPAVRGSIIANMLQEHDNPFTL. The chain crosses the membrane as a beta stranded span at residues 53–65; the sequence is YPYDTNYLIYTNT. Residues 66 to 84 lie on the Extracellular side of the membrane; it reads SDLNKEAISTYNWSENARK. A beta stranded transmembrane segment spans residues 85–99; sequence DEVKFQLSLAFPLWR. Over 100-105 the chain is Periplasmic; that stretch reads GILGPN. A beta stranded membrane pass occupies residues 106–118; sequence SVLGASYTQKSWW. Topologically, residues 119-128 are extracellular; the sequence is QLSNSKESSP. Ca(2+) is bound at residue serine 126. Residues 129 to 148 form a beta stranded membrane-spanning segment; the sequence is FRETNYEPQLFLGFATDYRF. The Periplasmic segment spans residues 149–150; it reads AG. Residues 151–164 traverse the membrane as a beta stranded segment; the sequence is WTLRDVEMGYNHDS. Histidine 162 (proton acceptor) is an active-site residue. The active-site Nucleophile is the serine 164. Residues 165–173 are Extracellular-facing; that stretch reads NGRSDPTSR. Residues arginine 167 and serine 172 each contribute to the Ca(2+) site. A beta stranded transmembrane segment spans residues 174 to 186; it reads SWNRLYTRLMAEN. At 187 to 188 the chain is on the periplasmic side; the sequence is GN. A beta stranded membrane pass occupies residues 189–198; sequence WLVEVKPWYV. The Extracellular portion of the chain corresponds to 199–216; sequence IGSTDDNPDITKYMGYYQ. Aspartate 204 is a binding site for Ca(2+). A beta stranded transmembrane segment spans residues 217-223; sequence LKIGYHL. The Periplasmic portion of the chain corresponds to 224–225; that stretch reads GE. A beta stranded membrane pass occupies residues 226–234; sequence AVLSAKGQY. The Extracellular segment spans residues 235 to 241; sequence NWNTGYG. The chain crosses the membrane as a beta stranded span at residues 242–250; the sequence is GAEVGLSYP. Residues 251–255 lie on the Periplasmic side of the membrane; it reads VTKHV. The chain crosses the membrane as a beta stranded span at residues 256 to 265; sequence RLYTQVYSGY. The Extracellular segment spans residues 266–274; sequence GESLIDYNF. Residues 275–286 form a beta stranded membrane-spanning segment; sequence NQTRVGVGVMLN. At 287–289 the chain is on the periplasmic side; that stretch reads DIF.

It belongs to the phospholipase A1 family. Homodimer; dimerization is reversible, and the dimeric form is the active one. It depends on Ca(2+) as a cofactor.

The protein resides in the cell outer membrane. It carries out the reaction a 1,2-diacyl-sn-glycero-3-phosphocholine + H2O = a 2-acyl-sn-glycero-3-phosphocholine + a fatty acid + H(+). It catalyses the reaction a 1,2-diacyl-sn-glycero-3-phosphocholine + H2O = a 1-acyl-sn-glycero-3-phosphocholine + a fatty acid + H(+). Its function is as follows. Hydrolysis of phosphatidylcholine with phospholipase A2 (EC 3.1.1.4) and phospholipase A1 (EC 3.1.1.32) activities. This Salmonella typhi protein is Phospholipase A1 (pldA).